The following is a 346-amino-acid chain: MHVLIACPYCPYPPSTPKHPKLPPKVKPPSTQPPHVKPPSTPKHPKDPPHVKPPSTPKQPPYVKPPTTPKHPPHVKPPSTPKHPKHPPQKPCPPPSHHGPKPPIVKPPHVPRPPIVHPPPIVSPPSTPKPPKTPPFTPKPPSPIPPIVSPPIVYPPITPTPPIVHPPVTPKPPSPTPPIVSPPIVYPPITPTPPVVSPPIIPTPPIVSPPFVPNPPVVIPPPYVPSPPVVTPPIVPTPPTPCPPPPPPPAIIPSPPAQPTCPIDALKLGACVDVLGGLIHIGIGGSAKQTCCPLLGGLVDLDAAICLCTTIRLKLLNINIILPIALQVLIDDCGKYPPKDFKCPST.

The disordered stretch occupies residues 11 to 144 (PYPPSTPKHP…PFTPKPPSPI (134 aa)). Composition is skewed to pro residues over residues 25–42 (KVKP…PSTP), 51–81 (VKPP…PSTP), and 89–144 (QKPC…PSPI).

The protein is 36.4 kDa proline-rich protein (TPRP-F1) of Solanum lycopersicum (Tomato).